A 409-amino-acid polypeptide reads, in one-letter code: Broad specificity amino-acid racemase (409 aa).

The N-terminal stretch at Met1–Ala25 is a signal peptide. Cysteines 72 and 98 form a disulfide. Lys76 acts as the Proton acceptor in catalysis. Position 76 is an N6-(pyridoxal phosphate)lysine (Lys76). Residue Arg175 coordinates substrate. The Proton acceptor role is filled by Tyr301. Met349 serves as a coordination point for substrate.

It belongs to the alanine racemase family. Bsr subfamily. Pyridoxal 5'-phosphate serves as cofactor.

It localises to the periplasm. The enzyme catalyses an L-alpha-amino acid = a D-alpha-amino acid. It carries out the reaction L-lysine = D-lysine. It catalyses the reaction L-arginine = D-arginine. Functionally, amino-acid racemase able to utilize a broad range of substrates. The polypeptide is Broad specificity amino-acid racemase (Vibrio parahaemolyticus serotype O3:K6 (strain RIMD 2210633)).